Consider the following 312-residue polypeptide: Aspartate carbamoyltransferase catalytic subunit (312 aa).

Residues R55 and T56 each contribute to the carbamoyl phosphate site. K83 provides a ligand contact to L-aspartate. Carbamoyl phosphate-binding residues include R105, H138, and Q141. Positions 171 and 225 each coordinate L-aspartate. 2 residues coordinate carbamoyl phosphate: G266 and P267.

The protein belongs to the aspartate/ornithine carbamoyltransferase superfamily. ATCase family. In terms of assembly, heterododecamer (2C3:3R2) of six catalytic PyrB chains organized as two trimers (C3), and six regulatory PyrI chains organized as three dimers (R2).

The catalysed reaction is carbamoyl phosphate + L-aspartate = N-carbamoyl-L-aspartate + phosphate + H(+). The protein operates within pyrimidine metabolism; UMP biosynthesis via de novo pathway; (S)-dihydroorotate from bicarbonate: step 2/3. Its function is as follows. Catalyzes the condensation of carbamoyl phosphate and aspartate to form carbamoyl aspartate and inorganic phosphate, the committed step in the de novo pyrimidine nucleotide biosynthesis pathway. The chain is Aspartate carbamoyltransferase catalytic subunit from Corynebacterium glutamicum (strain R).